Consider the following 625-residue polypeptide: Phosphomethylpyrimidine synthase (625 aa).

Substrate is bound by residues asparagine 230, methionine 259, tyrosine 288, histidine 324, 344 to 346 (SRG), 385 to 388 (DGLR), and glutamate 424. Histidine 428 contributes to the Zn(2+) binding site. Tyrosine 451 is a substrate binding site. Histidine 492 serves as a coordination point for Zn(2+). Cysteine 572, cysteine 575, and cysteine 580 together coordinate [4Fe-4S] cluster.

It belongs to the ThiC family. Homodimer. The cofactor is [4Fe-4S] cluster.

It catalyses the reaction 5-amino-1-(5-phospho-beta-D-ribosyl)imidazole + S-adenosyl-L-methionine = 4-amino-2-methyl-5-(phosphooxymethyl)pyrimidine + CO + 5'-deoxyadenosine + formate + L-methionine + 3 H(+). Its pathway is cofactor biosynthesis; thiamine diphosphate biosynthesis. In terms of biological role, catalyzes the synthesis of the hydroxymethylpyrimidine phosphate (HMP-P) moiety of thiamine from aminoimidazole ribotide (AIR) in a radical S-adenosyl-L-methionine (SAM)-dependent reaction. This is Phosphomethylpyrimidine synthase from Xanthomonas euvesicatoria pv. vesicatoria (strain 85-10) (Xanthomonas campestris pv. vesicatoria).